A 194-amino-acid chain; its full sequence is Imidazoleglycerol-phosphate dehydratase (194 aa).

It belongs to the imidazoleglycerol-phosphate dehydratase family.

It localises to the cytoplasm. The catalysed reaction is D-erythro-1-(imidazol-4-yl)glycerol 3-phosphate = 3-(imidazol-4-yl)-2-oxopropyl phosphate + H2O. It participates in amino-acid biosynthesis; L-histidine biosynthesis; L-histidine from 5-phospho-alpha-D-ribose 1-diphosphate: step 6/9. The chain is Imidazoleglycerol-phosphate dehydratase from Ruminiclostridium cellulolyticum (strain ATCC 35319 / DSM 5812 / JCM 6584 / H10) (Clostridium cellulolyticum).